The primary structure comprises 306 residues: Methionyl-tRNA formyltransferase (306 aa).

(6S)-5,6,7,8-tetrahydrofolate is bound at residue 110-113; that stretch reads SLLP.

Belongs to the Fmt family.

The enzyme catalyses L-methionyl-tRNA(fMet) + (6R)-10-formyltetrahydrofolate = N-formyl-L-methionyl-tRNA(fMet) + (6S)-5,6,7,8-tetrahydrofolate + H(+). Its function is as follows. Attaches a formyl group to the free amino group of methionyl-tRNA(fMet). The formyl group appears to play a dual role in the initiator identity of N-formylmethionyl-tRNA by promoting its recognition by IF2 and preventing the misappropriation of this tRNA by the elongation apparatus. The sequence is that of Methionyl-tRNA formyltransferase from Brucella melitensis biotype 2 (strain ATCC 23457).